The chain runs to 443 residues: Probable protein S-acyltransferase 7 (443 aa).

2 helical membrane-spanning segments follow: residues 44–64 (SLAL…IFVA) and 76–96 (GVSI…LLLL). Residues 149-199 (KYCDTCMLYRPPRCSHCSICNNCVERFDHHCPWVGQCIGMRNYRFFFMFVF) enclose the DHHC domain. Cys-179 (S-palmitoyl cysteine intermediate) is an active-site residue. The next 2 helical transmembrane spans lie at 193-213 (FFFM…AFCW) and 237-257 (SIVL…LTVF). Residues Ser-327 and Ser-377 each carry the phosphoserine modification. Over residues 382–392 (ATVDEQSDRPS) the composition is skewed to basic and acidic residues. The disordered stretch occupies residues 382 to 443 (ATVDEQSDRP…SGLVTENRPT (62 aa)). Ser-406 carries the phosphoserine modification.

It belongs to the DHHC palmitoyltransferase family.

The protein localises to the cell membrane. The enzyme catalyses L-cysteinyl-[protein] + hexadecanoyl-CoA = S-hexadecanoyl-L-cysteinyl-[protein] + CoA. Palmitoyl acyltransferase. This Arabidopsis thaliana (Mouse-ear cress) protein is Probable protein S-acyltransferase 7 (PAT07).